The following is a 640-amino-acid chain: Threonine--tRNA ligase (640 aa).

One can recognise a TGS domain in the interval 1–60; it reads MKITFPDGAVKEFEPGVSTADIAASISPGLKKKALAGKLNGELLDLVTPIHEDGAIEIVT. The catalytic stretch occupies residues 241–538; sequence DHRKLGKELD…LIEEYKGAFP (298 aa). The Zn(2+) site is built by Cys-334, His-385, and His-515.

This sequence belongs to the class-II aminoacyl-tRNA synthetase family. As to quaternary structure, homodimer. Zn(2+) serves as cofactor.

The protein resides in the cytoplasm. It carries out the reaction tRNA(Thr) + L-threonine + ATP = L-threonyl-tRNA(Thr) + AMP + diphosphate + H(+). Functionally, catalyzes the attachment of threonine to tRNA(Thr) in a two-step reaction: L-threonine is first activated by ATP to form Thr-AMP and then transferred to the acceptor end of tRNA(Thr). Also edits incorrectly charged L-seryl-tRNA(Thr). The protein is Threonine--tRNA ligase of Listeria monocytogenes serotype 4b (strain CLIP80459).